A 225-amino-acid polypeptide reads, in one-letter code: MEPIKNIPRLCRTLGYEFNEKAFLDQALTHRSASNKHNERLEFLGDSILSIVISDALYHQFPAATEGDLSRMRATLVCGKMLAEIAIEFKLGDYLKLGPGELKSGGFRRESILADAVEAIIGAIYLDSDIENCRQLVLNWYESRLKVIEPINQKDPKTLLQEYLQKYRKPLPVYRVAHTEGDAHEQTFTVECIVEDLSQAVVGVASSRRKAEQSAAAQVLELIKK.

The 123-residue stretch at 7–129 folds into the RNase III domain; it reads IPRLCRTLGY…IIGAIYLDSD (123 aa). Residue glutamate 42 participates in Mg(2+) binding. Aspartate 46 is an active-site residue. Residues aspartate 115 and glutamate 118 each coordinate Mg(2+). The active site involves glutamate 118. Positions 155–225 constitute a DRBM domain; the sequence is DPKTLLQEYL…AAQVLELIKK (71 aa).

Belongs to the ribonuclease III family. As to quaternary structure, homodimer. Mg(2+) serves as cofactor.

The protein resides in the cytoplasm. The enzyme catalyses Endonucleolytic cleavage to 5'-phosphomonoester.. In terms of biological role, digests double-stranded RNA. Involved in the processing of primary rRNA transcript to yield the immediate precursors to the large and small rRNAs (23S and 16S). Processes some mRNAs, and tRNAs when they are encoded in the rRNA operon. Processes pre-crRNA and tracrRNA of type II CRISPR loci if present in the organism. The protein is Ribonuclease 3 of Shewanella pealeana (strain ATCC 700345 / ANG-SQ1).